The following is a 325-amino-acid chain: Malate dehydrogenase (325 aa).

An NAD(+)-binding site is contributed by 9-15; it reads GAAGAIG. Substrate contacts are provided by R90 and R96. NAD(+) contacts are provided by residues N103, Q110, and 127–129; that span reads VGN. Residues N129 and R160 each contribute to the substrate site. Catalysis depends on H185, which acts as the Proton acceptor.

Belongs to the LDH/MDH superfamily. MDH type 2 family.

It catalyses the reaction (S)-malate + NAD(+) = oxaloacetate + NADH + H(+). Functionally, catalyzes the reversible oxidation of malate to oxaloacetate. This is Malate dehydrogenase from Rubrobacter xylanophilus (strain DSM 9941 / JCM 11954 / NBRC 16129 / PRD-1).